Consider the following 160-residue polypeptide: Cytosolic iron-sulfur assembly component 2A (160 aa).

H89, H123, E150, and E153 together coordinate Zn(2+).

This sequence belongs to the MIP18 family. As to quaternary structure, monomer and homodimer. Component of the CIA complex. Interacts with CIAO1. Interacts with IREB2. Interacts with APAF1. As to expression, substantially enriched in macrophages.

It is found in the cytoplasm. In terms of biological role, component of the cytosolic iron-sulfur protein assembly (CIA) complex, a multiprotein complex that mediates the incorporation of iron-sulfur cluster into extramitochondrial Fe/S proteins. As a CIA complex component and in collaboration with CIAO1 specifically matures ACO1 and stabilizes IREB2, connecting cytosolic iron-sulfur protein maturation with cellular iron regulation. May play a role in chromosome segregation through establishment of sister chromatid cohesion. May induce apoptosis in collaboration with APAF1. This chain is Cytosolic iron-sulfur assembly component 2A, found in Homo sapiens (Human).